A 133-amino-acid polypeptide reads, in one-letter code: Ribonucleases P/MRP protein subunit POP8 (133 aa).

In terms of assembly, component of nuclear RNase P and RNase MRP complexes. RNase P consists of an RNA moiety and at least 9 protein subunits including POP1, POP3, POP4, POP5, POP6, POP7, POP8, RPP1 and RPR2. RNase MRP complex consists of an RNA moiety and at least 10 protein subunits including POP1, POP3, POP4, POP5, POP6, POP7, POP8, RMP1, RPP1 and SNM1, many of which are shared with the RNase P complex.

It is found in the nucleus. The catalysed reaction is Endonucleolytic cleavage of RNA, removing 5'-extranucleotides from tRNA precursor.. In terms of biological role, component of ribonuclease P, a protein complex that generates mature tRNA molecules by cleaving their 5'-ends. Also a component of RNase MRP, which cleaves pre-rRNA sequences. The chain is Ribonucleases P/MRP protein subunit POP8 (POP8) from Saccharomyces cerevisiae (strain ATCC 204508 / S288c) (Baker's yeast).